A 546-amino-acid polypeptide reads, in one-letter code: Glucose-6-phosphate isomerase (546 aa).

Glu-356 serves as the catalytic Proton donor. Active-site residues include His-387 and Lys-507.

Belongs to the GPI family.

Its subcellular location is the cytoplasm. It catalyses the reaction alpha-D-glucose 6-phosphate = beta-D-fructose 6-phosphate. Its pathway is carbohydrate biosynthesis; gluconeogenesis. The protein operates within carbohydrate degradation; glycolysis; D-glyceraldehyde 3-phosphate and glycerone phosphate from D-glucose: step 2/4. In terms of biological role, catalyzes the reversible isomerization of glucose-6-phosphate to fructose-6-phosphate. The chain is Glucose-6-phosphate isomerase from Syntrophus aciditrophicus (strain SB).